The primary structure comprises 150 residues: MSGRKKTREPKEENVLGPAVREGEHVFGVAHIFASFNDTFIHVTDLSGRETLVRITGGMKVKADRDESSPYAAMLASQDVAQRCKELGITALHIKLRATGGNKTKTPGPGAQSALRALARSGMKIGRIEDVTPVPTDSTRRKGGRRGRRL.

The interval 129–150 (EDVTPVPTDSTRRKGGRRGRRL) is disordered. A compositionally biased stretch (basic residues) spans 141–150 (RKGGRRGRRL).

The protein belongs to the universal ribosomal protein uS11 family.

This is Small ribosomal subunit protein uS11y from Zea mays (Maize).